The sequence spans 1175 residues: DNA-directed RNA polymerase subunit beta (1175 aa).

A disordered region spans residues 1–24 (MEGSLLVASSASNNETANNVESTD). Positions 7–23 (VASSASNNETANNVEST) are enriched in low complexity.

This sequence belongs to the RNA polymerase beta chain family. In terms of assembly, the RNAP catalytic core consists of 2 alpha, 1 beta, 1 beta' and 1 omega subunit. When a sigma factor is associated with the core the holoenzyme is formed, which can initiate transcription.

The enzyme catalyses RNA(n) + a ribonucleoside 5'-triphosphate = RNA(n+1) + diphosphate. Functionally, DNA-dependent RNA polymerase catalyzes the transcription of DNA into RNA using the four ribonucleoside triphosphates as substrates. The sequence is that of DNA-directed RNA polymerase subunit beta from Renibacterium salmoninarum (strain ATCC 33209 / DSM 20767 / JCM 11484 / NBRC 15589 / NCIMB 2235).